A 1202-amino-acid chain; its full sequence is Protein HASTY 1 (1202 aa).

N-acetylmethionine is present on methionine 1.

Belongs to the exportin family. Interacts with RAN1. In terms of tissue distribution, expressed in roots, leaves and floral buds.

The protein resides in the nucleus. In terms of biological role, nucleocytoplasmic transporter involved in the nuclear export of microRNAs (miRNAs). Required for several miRNAs accumulation. Specifically required for miR156 accumulation which targets SPL3, SPL4 and SPL5 transcription factors. Involved in plant development through its role in miRNAs processing. Required for vegetative phase change and vegetative to reproductive phase transition. Functionally dependent on RAN1 binding. Does not seem to be involved in small interfering RNAs (siRNAs) processing. The protein is Protein HASTY 1 (HST1) of Arabidopsis thaliana (Mouse-ear cress).